A 310-amino-acid chain; its full sequence is Cytochrome f (310 aa).

The N-terminal stretch at 1–27 (MRRILTFFLGSIIIGLSIIISPSSSFA) is a signal peptide. Tyrosine 28, cysteine 48, cysteine 51, and histidine 52 together coordinate heme. Residues 277–297 (VIGLIAFFAGVALTQILLVLK) form a helical membrane-spanning segment.

It belongs to the cytochrome f family. The 4 large subunits of the cytochrome b6-f complex are cytochrome b6, subunit IV (17 kDa polypeptide, PetD), cytochrome f and the Rieske protein, while the 4 small subunits are PetG, PetL, PetM and PetN. The complex functions as a dimer. Heme is required as a cofactor.

The protein resides in the cellular thylakoid membrane. Its function is as follows. Component of the cytochrome b6-f complex, which mediates electron transfer between photosystem II (PSII) and photosystem I (PSI), cyclic electron flow around PSI, and state transitions. The chain is Cytochrome f from Prochlorococcus marinus (strain SARG / CCMP1375 / SS120).